Reading from the N-terminus, the 151-residue chain is Copper transporter 3 (151 aa).

Transmembrane regions (helical) follow at residues 52 to 72 and 103 to 123; these read LKMY…SECL and YLVM…AMAG.

It belongs to the copper transporter (Ctr) (TC 1.A.56) family. SLC31A subfamily. As to expression, highly expressed in stems and at lower levels in leaves and flowers.

Its subcellular location is the membrane. Functionally, involved in the transport of copper. The protein is Copper transporter 3 (COPT3) of Arabidopsis thaliana (Mouse-ear cress).